The sequence spans 66 residues: Large ribosomal subunit protein bL35 (66 aa).

Residues 1–15 (MPKMKTKSSAKKRFK) are compositionally biased toward basic residues. The disordered stretch occupies residues 1-32 (MPKMKTKSSAKKRFKMTATGKVRAGQAGKRHG).

The protein belongs to the bacterial ribosomal protein bL35 family.

This chain is Large ribosomal subunit protein bL35, found in Dinoroseobacter shibae (strain DSM 16493 / NCIMB 14021 / DFL 12).